Consider the following 254-residue polypeptide: Zinc import ATP-binding protein ZnuC (254 aa).

One can recognise an ABC transporter domain in the interval 5–221; it reads ICAADLSVSH…PAYRALFGSE (217 aa). 38–45 is an ATP binding site; it reads GPNGSGKS. The segment covering 234-245 has biased composition (basic and acidic residues); that stretch reads DHDHDHVAEGHR. Residues 234–254 are disordered; the sequence is DHDHDHVAEGHRHGPACAHPH.

It belongs to the ABC transporter superfamily. Zinc importer (TC 3.A.1.15.5) family. The complex is composed of two ATP-binding proteins (ZnuC), two transmembrane proteins (ZnuB) and a solute-binding protein (ZnuA).

It localises to the cell inner membrane. It carries out the reaction Zn(2+)(out) + ATP(in) + H2O(in) = Zn(2+)(in) + ADP(in) + phosphate(in) + H(+)(in). Functionally, part of the ABC transporter complex ZnuABC involved in zinc import. Responsible for energy coupling to the transport system. The polypeptide is Zinc import ATP-binding protein ZnuC (Paracoccus denitrificans (strain Pd 1222)).